We begin with the raw amino-acid sequence, 365 residues long: NAC domain-containing protein 43 (365 aa).

The NAC domain maps to valine 16–lysine 180. Residues isoleucine 116 to threonine 186 mediate DNA binding.

In terms of tissue distribution, expressed in various aboveground tissues undergoing thickening of the lignified secondary wall such as anthers, filaments of stamens, the base of carpels, styles, the boundaries between siliques and pedicels, the midrib of leaf veins, and inflorescence stems, specifically in interfascicular fibers (sclerenchyma), cells differentiating into vascular vessels, and xylary fibers (secondary xylem).

It is found in the nucleus. Transcription activator of genes involved in biosynthesis of secondary walls. Together with NST2 and NST3, required for the secondary cell wall thickening of sclerenchymatous fibers, secondary xylem (tracheary elements), and of the anther endocethium, which is necessary for anther dehiscence. May also regulate the secondary cell wall lignification of other tissues. The polypeptide is NAC domain-containing protein 43 (NAC043) (Arabidopsis thaliana (Mouse-ear cress)).